The sequence spans 1154 residues: ATP-dependent helicase/deoxyribonuclease subunit B (1154 aa).

The 284-residue stretch at 1–284 folds into the UvrD-like helicase ATP-binding domain; that stretch reads MSVRFIIGRS…EQLRHNVRHK (284 aa). 8–15 lines the ATP pocket; it reads GRSGSGKT. The UvrD-like helicase C-terminal domain maps to 279 to 583; that stretch reads HNVRHKHEEL…QFSLVPPATD (305 aa). 4 residues coordinate [4Fe-4S] cluster: cysteine 799, cysteine 1120, cysteine 1123, and cysteine 1129.

Belongs to the helicase family. AddB/RexB type 1 subfamily. As to quaternary structure, heterodimer of AddA and AddB. It depends on Mg(2+) as a cofactor. [4Fe-4S] cluster is required as a cofactor.

Its function is as follows. The heterodimer acts as both an ATP-dependent DNA helicase and an ATP-dependent, dual-direction single-stranded exonuclease. Recognizes the chi site generating a DNA molecule suitable for the initiation of homologous recombination. The AddB subunit has 5' -&gt; 3' nuclease activity but not helicase activity. This chain is ATP-dependent helicase/deoxyribonuclease subunit B, found in Anoxybacillus flavithermus (strain DSM 21510 / WK1).